We begin with the raw amino-acid sequence, 293 residues long: MHITLRQLEVFAEVLKSGSTTQASVMLALSQSAVSAALTDLEGQLGVQLFDRVGKRLVVNEHGRLLYPRALALLEQAVEIEQLFREDNGAIRIYASSTIGNYILPAVIARYRHDYPQLPIELSVGNSQDVMQAVLDFRVDIGFIEGPCHSTEIISEPWLEDELVVFAAPTSPLARGPVTLEQLAAAPWILRERGSGTREIVDYLLLSHLPKFEMAMELGNSEAIKHAVRHGLGISCLSRRVIEDQLQAGTLSEVAVPLPRLMRTLWRIHHRQKHLSNALRRFLDYCDPANVPR.

Residues 1 to 60 (MHITLRQLEVFAEVLKSGSTTQASVMLALSQSAVSAALTDLEGQLGVQLFDRVGKRLVVN) enclose the HTH lysR-type domain. A DNA-binding region (H-T-H motif) is located at residues 20–39 (TTQASVMLALSQSAVSAALT).

The protein belongs to the LysR transcriptional regulatory family.

This is an uncharacterized protein from Escherichia coli O157:H7.